The following is a 562-amino-acid chain: Sulfite reductase [NADPH] hemoprotein beta-component (562 aa).

[4Fe-4S] cluster is bound by residues C425, C431, C470, and C474. Siroheme is bound at residue C474.

This sequence belongs to the nitrite and sulfite reductase 4Fe-4S domain family. As to quaternary structure, alpha(8)-beta(8). The alpha component is a flavoprotein, the beta component is a hemoprotein. It depends on siroheme as a cofactor. [4Fe-4S] cluster serves as cofactor.

It carries out the reaction hydrogen sulfide + 3 NADP(+) + 3 H2O = sulfite + 3 NADPH + 4 H(+). The protein operates within sulfur metabolism; hydrogen sulfide biosynthesis; hydrogen sulfide from sulfite (NADPH route): step 1/1. Component of the sulfite reductase complex that catalyzes the 6-electron reduction of sulfite to sulfide. This is one of several activities required for the biosynthesis of L-cysteine from sulfate. In Tolumonas auensis (strain DSM 9187 / NBRC 110442 / TA 4), this protein is Sulfite reductase [NADPH] hemoprotein beta-component.